A 52-amino-acid chain; its full sequence is Sperm protamine P1 (52 aa).

It belongs to the protamine P1 family. In terms of assembly, cross-linked by interchain disulfide bonds around the DNA-helix. As to expression, testis.

Its subcellular location is the nucleus. The protein localises to the chromosome. Protamines substitute for histones in the chromatin of sperm during the haploid phase of spermatogenesis. They compact sperm DNA into a highly condensed, stable and inactive complex. In Alouatta seniculus (Red howler monkey), this protein is Sperm protamine P1 (PRM1).